The following is a 458-amino-acid chain: 5'-adenylylsulfate reductase 3, chloroplastic (458 aa).

Residues M1 to D24 form a disordered region. A chloroplast-targeting transit peptide spans M1 to V69. Positions S8 to S23 are enriched in low complexity. The tract at residues A70–G319 is reductase domain. A Thioredoxin domain is found at A337–R458. Active-site nucleophile residues include C378 and C381. Cysteines 378 and 381 form a disulfide.

Belongs to the APS reductase family. The cofactor is [4Fe-4S] cluster. As to expression, leaves, roots and stem.

It is found in the plastid. It localises to the chloroplast. It catalyses the reaction glutathione disulfide + sulfite + AMP + 2 H(+) = adenosine 5'-phosphosulfate + 2 glutathione. Stimulated by sodium sulfate &gt; ammonium sulfate. In terms of biological role, reduces sulfate for Cys biosynthesis. Substrate preference is adenosine-5'-phosphosulfate (APS) &gt;&gt; 3'-phosphoadenosine-5'-phosphosulfate (PAPS). Uses glutathione or DTT as source of protons. The sequence is that of 5'-adenylylsulfate reductase 3, chloroplastic (APR3) from Arabidopsis thaliana (Mouse-ear cress).